Consider the following 375-residue polypeptide: Chaperone protein DnaJ (375 aa).

The J domain occupies 5–70 (DFYETLGVAK…QKRAAYDRYG (66 aa)). The CR-type zinc-finger motif lies at 136–214 (GKTAQIRVPT…CHGQGRVTEE (79 aa)). Zn(2+) contacts are provided by C149, C152, C166, C169, C188, C191, C202, and C205. CXXCXGXG motif repeat units follow at residues 149–156 (CDVCSGSG), 166–173 (CGTCQGSG), 188–195 (CPTCHGRG), and 202–209 (CPKCHGQG).

The protein belongs to the DnaJ family. Homodimer. Zn(2+) serves as cofactor.

It localises to the cytoplasm. In terms of biological role, participates actively in the response to hyperosmotic and heat shock by preventing the aggregation of stress-denatured proteins and by disaggregating proteins, also in an autonomous, DnaK-independent fashion. Unfolded proteins bind initially to DnaJ; upon interaction with the DnaJ-bound protein, DnaK hydrolyzes its bound ATP, resulting in the formation of a stable complex. GrpE releases ADP from DnaK; ATP binding to DnaK triggers the release of the substrate protein, thus completing the reaction cycle. Several rounds of ATP-dependent interactions between DnaJ, DnaK and GrpE are required for fully efficient folding. Also involved, together with DnaK and GrpE, in the DNA replication of plasmids through activation of initiation proteins. This is Chaperone protein DnaJ from Rhizobium etli (strain CIAT 652).